The chain runs to 854 residues: DNA mismatch repair protein MutS (854 aa).

An ATP-binding site is contributed by 614–621 (GPNMGGKS).

Belongs to the DNA mismatch repair MutS family.

Its function is as follows. This protein is involved in the repair of mismatches in DNA. It is possible that it carries out the mismatch recognition step. This protein has a weak ATPase activity. This Sodalis glossinidius (strain morsitans) protein is DNA mismatch repair protein MutS.